A 304-amino-acid polypeptide reads, in one-letter code: Ribosomal RNA small subunit methyltransferase H (304 aa).

Residues 50–52, aspartate 69, phenylalanine 97, aspartate 113, and glutamine 120 contribute to the S-adenosyl-L-methionine site; that span reads GGH.

It belongs to the methyltransferase superfamily. RsmH family.

The protein resides in the cytoplasm. It catalyses the reaction cytidine(1402) in 16S rRNA + S-adenosyl-L-methionine = N(4)-methylcytidine(1402) in 16S rRNA + S-adenosyl-L-homocysteine + H(+). Its function is as follows. Specifically methylates the N4 position of cytidine in position 1402 (C1402) of 16S rRNA. In Rippkaea orientalis (strain PCC 8801 / RF-1) (Cyanothece sp. (strain PCC 8801)), this protein is Ribosomal RNA small subunit methyltransferase H.